A 291-amino-acid polypeptide reads, in one-letter code: MEMO1 family protein TON_0132 (291 aa).

Belongs to the MEMO1 family.

In Thermococcus onnurineus (strain NA1), this protein is MEMO1 family protein TON_0132.